Reading from the N-terminus, the 478-residue chain is Glutamyl-tRNA(Gln) amidotransferase subunit A 2 (478 aa).

Residues lysine 79 and serine 154 each act as charge relay system in the active site. Serine 178 serves as the catalytic Acyl-ester intermediate.

It belongs to the amidase family. GatA subfamily. In terms of assembly, heterotrimer of A, B and C subunits.

It carries out the reaction L-glutamyl-tRNA(Gln) + L-glutamine + ATP + H2O = L-glutaminyl-tRNA(Gln) + L-glutamate + ADP + phosphate + H(+). Functionally, allows the formation of correctly charged Gln-tRNA(Gln) through the transamidation of misacylated Glu-tRNA(Gln) in organisms which lack glutaminyl-tRNA synthetase. The reaction takes place in the presence of glutamine and ATP through an activated gamma-phospho-Glu-tRNA(Gln). The protein is Glutamyl-tRNA(Gln) amidotransferase subunit A 2 (gatA2) of Clostridium acetobutylicum (strain ATCC 824 / DSM 792 / JCM 1419 / IAM 19013 / LMG 5710 / NBRC 13948 / NRRL B-527 / VKM B-1787 / 2291 / W).